Reading from the N-terminus, the 395-residue chain is Chorismate synthase (395 aa).

NADP(+) is bound by residues Arg40 and Arg46. The disordered stretch occupies residues 99-120 (PREGRNAPLSRPRPGHADLTGM). FMN contacts are provided by residues 134-136 (RSS), 256-257 (QA), Gly301, 316-320 (KPIPS), and Arg342.

The protein belongs to the chorismate synthase family. In terms of assembly, homotetramer. The cofactor is FMNH2.

The enzyme catalyses 5-O-(1-carboxyvinyl)-3-phosphoshikimate = chorismate + phosphate. The protein operates within metabolic intermediate biosynthesis; chorismate biosynthesis; chorismate from D-erythrose 4-phosphate and phosphoenolpyruvate: step 7/7. Functionally, catalyzes the anti-1,4-elimination of the C-3 phosphate and the C-6 proR hydrogen from 5-enolpyruvylshikimate-3-phosphate (EPSP) to yield chorismate, which is the branch point compound that serves as the starting substrate for the three terminal pathways of aromatic amino acid biosynthesis. This reaction introduces a second double bond into the aromatic ring system. The chain is Chorismate synthase from Bifidobacterium longum (strain DJO10A).